The primary structure comprises 389 residues: ATP phosphoribosyltransferase regulatory subunit (389 aa).

Belongs to the class-II aminoacyl-tRNA synthetase family. HisZ subfamily. In terms of assembly, heteromultimer composed of HisG and HisZ subunits.

The protein localises to the cytoplasm. It participates in amino-acid biosynthesis; L-histidine biosynthesis; L-histidine from 5-phospho-alpha-D-ribose 1-diphosphate: step 1/9. Its function is as follows. Required for the first step of histidine biosynthesis. May allow the feedback regulation of ATP phosphoribosyltransferase activity by histidine. This chain is ATP phosphoribosyltransferase regulatory subunit, found in Hydrogenovibrio crunogenus (strain DSM 25203 / XCL-2) (Thiomicrospira crunogena).